A 338-amino-acid polypeptide reads, in one-letter code: Ketol-acid reductoisomerase (NADP(+)) (338 aa).

The region spanning 1–181 (MKVFYDKDCD…GGGRTGIIET (181 aa)) is the KARI N-terminal Rossmann domain. NADP(+)-binding positions include 24–27 (YGSQ), Arg-47, Ser-50, Thr-52, and 82–85 (DEFQ). His-107 is a catalytic residue. Gly-133 is an NADP(+) binding site. One can recognise a KARI C-terminal knotted domain in the interval 182 to 327 (TFKDETETDL…EQLRSMMPWI (146 aa)). Mg(2+) contacts are provided by Asp-190, Glu-194, Glu-226, and Glu-230. Position 251 (Ser-251) interacts with substrate.

The protein belongs to the ketol-acid reductoisomerase family. Mg(2+) is required as a cofactor.

It catalyses the reaction (2R)-2,3-dihydroxy-3-methylbutanoate + NADP(+) = (2S)-2-acetolactate + NADPH + H(+). The enzyme catalyses (2R,3R)-2,3-dihydroxy-3-methylpentanoate + NADP(+) = (S)-2-ethyl-2-hydroxy-3-oxobutanoate + NADPH + H(+). It participates in amino-acid biosynthesis; L-isoleucine biosynthesis; L-isoleucine from 2-oxobutanoate: step 2/4. It functions in the pathway amino-acid biosynthesis; L-valine biosynthesis; L-valine from pyruvate: step 2/4. Its function is as follows. Involved in the biosynthesis of branched-chain amino acids (BCAA). Catalyzes an alkyl-migration followed by a ketol-acid reduction of (S)-2-acetolactate (S2AL) to yield (R)-2,3-dihydroxy-isovalerate. In the isomerase reaction, S2AL is rearranged via a Mg-dependent methyl migration to produce 3-hydroxy-3-methyl-2-ketobutyrate (HMKB). In the reductase reaction, this 2-ketoacid undergoes a metal-dependent reduction by NADPH to yield (R)-2,3-dihydroxy-isovalerate. The chain is Ketol-acid reductoisomerase (NADP(+)) from Pseudomonas putida (strain W619).